We begin with the raw amino-acid sequence, 940 residues long: PTS system glucose-specific EIICBA component (940 aa).

The PTS EIIC type-1; first part domain maps to 1–284 (MQIKAQDTGQ…YAPLWYTSAG (284 aa)). Transmembrane regions (helical) follow at residues 43-63 (LMIP…GDAI), 83-103 (GGDV…AITF), 112-132 (FSAF…ILPF), 175-195 (VFGG…FYAI), and 209-229 (FVPI…LMIW). A unknown region spans residues 285-478 (GSLQEIVNQQ…VNSFRVAVES (194 aa)). The 152-residue stretch at 479 to 630 (LNPAQYSQGK…FNLATPGRGG (152 aa)) folds into the PTS EIIC type-1; second part domain. Helical transmembrane passes span 487-507 (GKFP…ILAA), 515-535 (AASI…TEPF), 537-557 (FTFL…LAAV), 564-584 (ILGA…ILYG), and 598-618 (LVPI…YFLI). In terms of domain architecture, PTS EIIB type-1 spans 661-743 (QIEAGILLQA…QDIIQGKVNW (83 aa)). The active-site Phosphocysteine intermediate; for EIIB activity is the cysteine 683. Residues 794–907 (DETFKQKLVG…NPITPFVVMK (114 aa)) enclose the PTS EIIA type-1 domain. The active-site Tele-phosphohistidine intermediate; for EIIA activity is histidine 847.

Its subcellular location is the cell membrane. It catalyses the reaction N(pros)-phospho-L-histidyl-[protein] + D-glucose(out) = D-glucose 6-phosphate(in) + L-histidyl-[protein]. Functionally, the phosphoenolpyruvate-dependent sugar phosphotransferase system (sugar PTS), a major carbohydrate active transport system, catalyzes the phosphorylation of incoming sugar substrates concomitantly with their translocation across the cell membrane. This system is involved in glucose transport. The protein is PTS system glucose-specific EIICBA component (ptsG) of Mycoplasma pneumoniae (strain ATCC 29342 / M129 / Subtype 1) (Mycoplasmoides pneumoniae).